Here is a 118-residue protein sequence, read N- to C-terminus: Large ribosomal subunit protein uL22 (118 aa).

The protein belongs to the universal ribosomal protein uL22 family. As to quaternary structure, part of the 50S ribosomal subunit.

This protein binds specifically to 23S rRNA; its binding is stimulated by other ribosomal proteins, e.g. L4, L17, and L20. It is important during the early stages of 50S assembly. It makes multiple contacts with different domains of the 23S rRNA in the assembled 50S subunit and ribosome. Functionally, the globular domain of the protein is located near the polypeptide exit tunnel on the outside of the subunit, while an extended beta-hairpin is found that lines the wall of the exit tunnel in the center of the 70S ribosome. The polypeptide is Large ribosomal subunit protein uL22 (Pediococcus pentosaceus (strain ATCC 25745 / CCUG 21536 / LMG 10740 / 183-1w)).